The following is a 61-amino-acid chain: MAKKALVNKANKKPKFAVRAYTRCQRCGRPHSVFRKFGLCRICVREMAHAGELPGVRKSSW.

Residues C24, C27, C40, and C43 each coordinate Zn(2+).

This sequence belongs to the universal ribosomal protein uS14 family. Zinc-binding uS14 subfamily. In terms of assembly, part of the 30S ribosomal subunit. Contacts proteins S3 and S10. Requires Zn(2+) as cofactor.

Binds 16S rRNA, required for the assembly of 30S particles and may also be responsible for determining the conformation of the 16S rRNA at the A site. This chain is Small ribosomal subunit protein uS14, found in Rhodococcus erythropolis (strain PR4 / NBRC 100887).